The chain runs to 257 residues: Glutamate racemase (257 aa).

Substrate-binding positions include 12-13 and 44-45; these read DS and YG. The active-site Proton donor/acceptor is the Cys75. 76 to 77 provides a ligand contact to substrate; it reads NT. The active-site Proton donor/acceptor is the Cys185. Residue 186-187 coordinates substrate; it reads TH.

Belongs to the aspartate/glutamate racemases family.

The catalysed reaction is L-glutamate = D-glutamate. Its pathway is cell wall biogenesis; peptidoglycan biosynthesis. Provides the (R)-glutamate required for cell wall biosynthesis. This chain is Glutamate racemase, found in Clostridium botulinum (strain Langeland / NCTC 10281 / Type F).